Here is a 173-residue protein sequence, read N- to C-terminus: Lipoprotein signal peptidase (173 aa).

The next 4 helical transmembrane spans lie at 7–27 (FFWF…LWVV), 41–61 (LWPG…FSLF), 70–90 (WLSL…PNFN), and 95–115 (AGYG…FVAG). Active-site residues include D119 and D135. Residues 130-150 (IFNLADVFINIGIICLLIAAW) form a helical membrane-spanning segment.

This sequence belongs to the peptidase A8 family.

The protein localises to the cell inner membrane. It carries out the reaction Release of signal peptides from bacterial membrane prolipoproteins. Hydrolyzes -Xaa-Yaa-Zaa-|-(S,diacylglyceryl)Cys-, in which Xaa is hydrophobic (preferably Leu), and Yaa (Ala or Ser) and Zaa (Gly or Ala) have small, neutral side chains.. It functions in the pathway protein modification; lipoprotein biosynthesis (signal peptide cleavage). Functionally, this protein specifically catalyzes the removal of signal peptides from prolipoproteins. This chain is Lipoprotein signal peptidase, found in Cyanothece sp. (strain PCC 7425 / ATCC 29141).